The sequence spans 160 residues: Transcription antitermination protein NusB (160 aa).

Belongs to the NusB family.

Functionally, involved in transcription antitermination. Required for transcription of ribosomal RNA (rRNA) genes. Binds specifically to the boxA antiterminator sequence of the ribosomal RNA (rrn) operons. In Allorhizobium ampelinum (strain ATCC BAA-846 / DSM 112012 / S4) (Agrobacterium vitis (strain S4)), this protein is Transcription antitermination protein NusB.